The following is a 186-amino-acid chain: ADP-ribosylation factor-like protein 8 (186 aa).

Residues 1-19 (MLALINRILEWFKSIFWKE) constitute an intramembrane region (note=Mediates targeting to membranes). Residues 29–35 (QFSGKTT), 71–75 (DIGGQ), and 130–133 (NKRD) each bind GTP.

This sequence belongs to the small GTPase superfamily. Arf family. As to quaternary structure, interacts with tubulin. Interacts (in GTP-bound form) with Rilpl. Interacts with unc-104. Expressed throughout development, from embryo to adult stage, in different tissues such as larval motor neurons, salivary glands, testis and ovaries (at protein level).

It is found in the lysosome membrane. The protein resides in the synapse. Its subcellular location is the cell projection. The protein localises to the axon. It localises to the perikaryon. Functionally, required for normal functioning of the late endocytic pathway including lysosome motility and late endosome-lysosome fusion. Not required for the delivery of lysosomal membrane protein-containing vesicles to late endosomes. In larval motor neurons, mediates the anterograde axonal long-range transport of presynaptic lysosome-related vesicles required for presynaptic biogenesis and synaptic function. Acts downstream of Rab2 during presynaptic precursor vesicle biogenesis. Essential role in chromosome segregation. The protein is ADP-ribosylation factor-like protein 8 of Drosophila melanogaster (Fruit fly).